The chain runs to 410 residues: ORC1-type DNA replication protein 4 (410 aa).

Residues 73-77 (TGKSL), tyrosine 220, and arginine 232 each bind ATP.

It belongs to the CDC6/cdc18 family.

Functionally, involved in regulation of DNA replication. The polypeptide is ORC1-type DNA replication protein 4 (orc4) (Halobacterium salinarum (strain ATCC 700922 / JCM 11081 / NRC-1) (Halobacterium halobium)).